The sequence spans 85 residues: Growth factor (85 aa).

Positions 1–19 (MVPRDLVATLLCAMCIVQA) are cleaved as a signal peptide. An EGF-like domain is found at 33–77 (RIKLCNDDYKNYCLNNGTCFTVALNNVSLNPFCACHINYVGSRCQ). 3 disulfides stabilise this stretch: Cys37-Cys51, Cys45-Cys65, and Cys67-Cys76. N-linked (GlcNAc...) asparagine; by host glycosylation is found at Asn48 and Asn58.

It is found in the secreted. Its function is as follows. Stimulates the growth of some tissues. The protein is Growth factor (MGF) of Oryctolagus cuniculus (Rabbit).